A 398-amino-acid polypeptide reads, in one-letter code: F-box/kelch-repeat protein At1g30090 (398 aa).

Residues 51–98 enclose the F-box domain; sequence EPLIPGLPDDVALNCLLRVPVQSHVSSKSVCKRWHLLFGTKETFFAKR. Kelch repeat units lie at residues 106-152, 159-207, 209-255, 257-304, and 305-346; these read PWLF…FRSV, TMFV…VIDG, IYAA…VLNG, LLVT…IYDR, and LFIV…AVNC.

In Arabidopsis thaliana (Mouse-ear cress), this protein is F-box/kelch-repeat protein At1g30090.